A 162-amino-acid chain; its full sequence is Troponin C, skeletal muscle (162 aa).

Alanine 1 is subject to N-acetylalanine. 4 consecutive EF-hand domains span residues 17-52, 53-88, 93-128, and 129-162; these read EMIA…LGQT, PTKE…QMKE, KSEE…SGES, and ITDE…EGVQ. 19 residues coordinate Ca(2+): aspartate 30, aspartate 32, aspartate 36, glutamate 41, aspartate 66, aspartate 68, serine 70, threonine 72, glutamate 77, aspartate 106, asparagine 108, aspartate 110, tyrosine 112, glutamate 117, aspartate 142, asparagine 144, aspartate 146, lysine 148, and glutamate 153.

It belongs to the troponin C family.

Troponin is the central regulatory protein of striated muscle contraction. Tn consists of three components: Tn-I which is the inhibitor of actomyosin ATPase, Tn-T which contains the binding site for tropomyosin and Tn-C. The binding of calcium to Tn-C abolishes the inhibitory action of Tn on actin filaments. The polypeptide is Troponin C, skeletal muscle (Pelophylax lessonae (Pool frog)).